A 78-amino-acid chain; its full sequence is MPMPKIADARALSDEELSQEIYAVKKELFELRLQQATRQLNQPHLIRLRKHKLAQLLTVESERKRGKSLSSTQTQKEE.

The segment at 59 to 78 (VESERKRGKSLSSTQTQKEE) is disordered. Residues 68 to 78 (SLSSTQTQKEE) show a composition bias toward polar residues.

It belongs to the universal ribosomal protein uL29 family.

The sequence is that of Large ribosomal subunit protein uL29 from Synechococcus sp. (strain JA-3-3Ab) (Cyanobacteria bacterium Yellowstone A-Prime).